The following is a 154-amino-acid chain: Interleukin-2 (154 aa).

An N-terminal signal peptide occupies residues 1 to 20 (MYKLQFLSCIALTLALVANS). Residue threonine 23 is glycosylated (O-linked (GalNAc...) threonine). A disulfide bridge links cysteine 78 with cysteine 126. Asparagine 111 carries an N-linked (GlcNAc...) asparagine glycan.

Belongs to the IL-2 family.

Its subcellular location is the secreted. Functionally, cytokine produced by activated CD4-positive helper T-cells and to a lesser extend activated CD8-positive T-cells and natural killer (NK) cells that plays pivotal roles in the immune response and tolerance. Binds to a receptor complex composed of either the high-affinity trimeric IL-2R (IL2RA/CD25, IL2RB/CD122 and IL2RG/CD132) or the low-affinity dimeric IL-2R (IL2RB and IL2RG). Interaction with the receptor leads to oligomerization and conformation changes in the IL-2R subunits resulting in downstream signaling starting with phosphorylation of JAK1 and JAK3. In turn, JAK1 and JAK3 phosphorylate the receptor to form a docking site leading to the phosphorylation of several substrates including STAT5. This process leads to activation of several pathways including STAT, phosphoinositide-3-kinase/PI3K and mitogen-activated protein kinase/MAPK pathways. Functions as a T-cell growth factor and can increase NK-cell cytolytic activity as well. Promotes strong proliferation of activated B-cells and subsequently immunoglobulin production. Plays a pivotal role in regulating the adaptive immune system by controlling the survival and proliferation of regulatory T-cells, which are required for the maintenance of immune tolerance. Moreover, participates in the differentiation and homeostasis of effector T-cell subsets, including Th1, Th2, Th17 as well as memory CD8-positive T-cells. This is Interleukin-2 (IL2) from Camelus bactrianus (Bactrian camel).